The sequence spans 495 residues: Loline biosynthesis cluster 1 transcription factor lolU1 (495 aa).

It is found in the nucleus. Transcriptional regulator that may regulate the expression of the loline biosynthesis cluster 1, one of the 2 clusters involved in the biosynthesis of loline alkaloids, potent insecticidal agents composed of a pyrrolizidine ring system and an uncommon ether bridge linking carbons 2 and 7. This is Loline biosynthesis cluster 1 transcription factor lolU1 from Epichloe uncinata (Endophyte fungus).